The primary structure comprises 130 residues: Small ribosomal subunit protein uS9 (130 aa).

It belongs to the universal ribosomal protein uS9 family.

The sequence is that of Small ribosomal subunit protein uS9 from Streptococcus equi subsp. zooepidemicus (strain H70).